A 385-amino-acid chain; its full sequence is Sesquiterpene alcohol synthase (385 aa).

Positions 123 and 127 each coordinate Mg(2+). Residues 123 to 127 (DDISD) carry the DDXXD motif motif.

It belongs to the terpene synthase family. It depends on Mg(2+) as a cofactor. Specifically expressed in tissues lining the cuticle of the abdominal sternites of mature males.

The catalysed reaction is (2E,6E)-farnesyl diphosphate + H2O = (1S,6S,7R)-sesquipiperitol + diphosphate. Its pathway is pheromone biosynthesis. Sesquiterpene alcohol synthase that catalyzes the formation of (1S,6S,7R)-sesquipiperitol, a terpene intermediate in murgantiol biosynthesis, a male-released aggregation pheromone. The protein is Sesquiterpene alcohol synthase of Murgantia histrionica (Harlequin bug).